The following is a 301-amino-acid chain: Probable alpha-L-glutamate ligase (301 aa).

An ATP-grasp domain is found at 104-287 (LQLLSRKGIG…VAGMIFDFIE (184 aa)). ATP-binding positions include Lys-141, 178–179 (EF), Asp-187, and 211–213 (RSN). Mg(2+) contacts are provided by Asp-248, Glu-260, and Asn-262. 3 residues coordinate Mn(2+): Asp-248, Glu-260, and Asn-262.

This sequence belongs to the RimK family. The cofactor is Mg(2+). It depends on Mn(2+) as a cofactor.

The polypeptide is Probable alpha-L-glutamate ligase (Vibrio parahaemolyticus serotype O3:K6 (strain RIMD 2210633)).